The sequence spans 192 residues: Fe/S biogenesis protein NfuA (192 aa).

2 residues coordinate [4Fe-4S] cluster: C150 and C153.

The protein belongs to the NfuA family. Homodimer. It depends on [4Fe-4S] cluster as a cofactor.

In terms of biological role, involved in iron-sulfur cluster biogenesis. Binds a 4Fe-4S cluster, can transfer this cluster to apoproteins, and thereby intervenes in the maturation of Fe/S proteins. Could also act as a scaffold/chaperone for damaged Fe/S proteins. The protein is Fe/S biogenesis protein NfuA of Buchnera aphidicola subsp. Acyrthosiphon pisum (strain APS) (Acyrthosiphon pisum symbiotic bacterium).